Consider the following 78-residue polypeptide: Cytochrome c oxidase subunit 8, mitochondrial (78 aa).

The transit peptide at 1–27 directs the protein to the mitochondrion; it reads MLCQQMIRTTAKRSSNIMTRPIIMKRS. The Mitochondrial matrix portion of the chain corresponds to 28–51; that stretch reads VHFKDGVYENIPFKVKGRKTPYAL. A helical membrane pass occupies residues 52-73; the sequence is SHFGFFAIGFAVPFVACYVQLK. Residue Lys-74 is a topological domain, mitochondrial intermembrane. A propeptide spanning residues 75-78 is cleaved from the precursor; it reads SGAF.

The protein belongs to the cytochrome c oxidase VIIc family. In terms of assembly, component of the cytochrome c oxidase (complex IV, CIV), a multisubunit enzyme composed of 12 subunits. The complex is composed of a catalytic core of 3 subunits COX1, COX2 and COX3, encoded in the mitochondrial DNA, and 9 supernumerary subunits COX4, COX5A (or COX5B), COX6, COX7, COX8, COX9, COX12, COX13 and COX26, which are encoded in the nuclear genome. The complex exists as a monomer or a dimer and forms supercomplexes (SCs) in the inner mitochondrial membrane with a dimer of ubiquinol-cytochrome c oxidoreductase (cytochrome b-c1 complex, complex III, CIII), resulting in 2 different assemblies (supercomplexes III(2)IV and III(2)IV(2)).

It localises to the mitochondrion inner membrane. It participates in energy metabolism; oxidative phosphorylation. Component of the cytochrome c oxidase, the last enzyme in the mitochondrial electron transport chain which drives oxidative phosphorylation. The respiratory chain contains 3 multisubunit complexes succinate dehydrogenase (complex II, CII), ubiquinol-cytochrome c oxidoreductase (cytochrome b-c1 complex, complex III, CIII) and cytochrome c oxidase (complex IV, CIV), that cooperate to transfer electrons derived from NADH and succinate to molecular oxygen, creating an electrochemical gradient over the inner membrane that drives transmembrane transport and the ATP synthase. Cytochrome c oxidase is the component of the respiratory chain that catalyzes the reduction of oxygen to water. Electrons originating from reduced cytochrome c in the intermembrane space (IMS) are transferred via the dinuclear copper A center (CU(A)) of COX2 and heme A of COX1 to the active site in COX1, a binuclear center (BNC) formed by heme A3 and copper B (CU(B)). The BNC reduces molecular oxygen to 2 water molecules using 4 electrons from cytochrome c in the IMS and 4 protons from the mitochondrial matrix. This Saccharomyces cerevisiae (strain ATCC 204508 / S288c) (Baker's yeast) protein is Cytochrome c oxidase subunit 8, mitochondrial (COX8).